We begin with the raw amino-acid sequence, 1047 residues long: Atrial natriuretic peptide receptor 2 (1047 aa).

Residues 1–16 form the signal peptide; that stretch reads MALPSLLLVVAALAGG. Residues 17 to 458 lie on the Extracellular side of the membrane; it reads VRPPGARNLT…DKTPLSTLAI (442 aa). Asn24 and Asn35 each carry an N-linked (GlcNAc...) asparagine glycan. The cysteines at positions 75 and 101 are disulfide-linked. Asn161, Asn195, Asn244, Asn277, and Asn349 each carry an N-linked (GlcNAc...) asparagine glycan. Residues 459–478 traverse the membrane as a helical segment; that stretch reads VALGTGITFIMFGVSSFLIF. The Cytoplasmic segment spans residues 479–1047; it reads RKLMLEKELA…GERKGPAGLL (569 aa). The residue at position 513 (Ser513) is a Phosphoserine. One can recognise a Protein kinase domain in the interval 513–786; the sequence is SRLTLSLRGS…PDFGQIKGFI (274 aa). Thr516 carries the post-translational modification Phosphothreonine. A phosphoserine mark is found at Ser518, Ser522, Ser523, and Ser526. Thr529 is modified (phosphothreonine). Residues 861–991 form the Guanylate cyclase domain; the sequence is TIYFSDIVGF…DTVNTASRME (131 aa).

This sequence belongs to the adenylyl cyclase class-4/guanylyl cyclase family. In terms of processing, phosphorylated. Phosphorylation of the protein kinase-like domain is required for full activation by CNP. Glycosylated.

The protein localises to the cell membrane. The catalysed reaction is GTP = 3',5'-cyclic GMP + diphosphate. Receptor for the C-type natriuretic peptide NPPC/CNP hormone. Has guanylate cyclase activity upon binding of its ligand. May play a role in the regulation of skeletal growth. The sequence is that of Atrial natriuretic peptide receptor 2 (NPR2) from Bos taurus (Bovine).